Reading from the N-terminus, the 132-residue chain is Large ribosomal subunit protein uL14 (132 aa).

It belongs to the universal ribosomal protein uL14 family. In terms of assembly, part of the 50S ribosomal subunit. Forms a cluster with proteins L3 and L24e, part of which may contact the 16S rRNA in 2 intersubunit bridges.

Functionally, binds to 23S rRNA. Forms part of two intersubunit bridges in the 70S ribosome. The chain is Large ribosomal subunit protein uL14 from Picrophilus torridus (strain ATCC 700027 / DSM 9790 / JCM 10055 / NBRC 100828 / KAW 2/3).